The following is a 372-amino-acid chain: 4-hydroxy-3-methylbut-2-en-1-yl diphosphate synthase (flavodoxin) (372 aa).

[4Fe-4S] cluster is bound by residues Cys270, Cys273, Cys305, and Glu312.

This sequence belongs to the IspG family. The cofactor is [4Fe-4S] cluster.

It carries out the reaction (2E)-4-hydroxy-3-methylbut-2-enyl diphosphate + oxidized [flavodoxin] + H2O + 2 H(+) = 2-C-methyl-D-erythritol 2,4-cyclic diphosphate + reduced [flavodoxin]. The protein operates within isoprenoid biosynthesis; isopentenyl diphosphate biosynthesis via DXP pathway; isopentenyl diphosphate from 1-deoxy-D-xylulose 5-phosphate: step 5/6. Functionally, converts 2C-methyl-D-erythritol 2,4-cyclodiphosphate (ME-2,4cPP) into 1-hydroxy-2-methyl-2-(E)-butenyl 4-diphosphate. The chain is 4-hydroxy-3-methylbut-2-en-1-yl diphosphate synthase (flavodoxin) from Aliivibrio fischeri (strain ATCC 700601 / ES114) (Vibrio fischeri).